The chain runs to 187 residues: Ubiquinone biosynthesis protein COQ4 homolog, mitochondrial (187 aa).

4 residues coordinate Zn(2+): histidine 77, aspartate 78, histidine 81, and glutamate 93.

The protein belongs to the COQ4 family. Component of a multi-subunit COQ enzyme complex. Requires Zn(2+) as cofactor.

Its subcellular location is the mitochondrion inner membrane. The enzyme catalyses a 4-hydroxy-3-methoxy-5-(all-trans-polyprenyl)benzoate + H(+) = a 2-methoxy-6-(all-trans-polyprenyl)phenol + CO2. It participates in cofactor biosynthesis; ubiquinone biosynthesis. Lyase that catalyzes the C1-decarboxylation of 4-hydroxy-3-methoxy-5-(all-trans-polyprenyl)benzoic acid into 2-methoxy-6-(all-trans-polyprenyl)phenol during ubiquinone biosynthesis. This is Ubiquinone biosynthesis protein COQ4 homolog, mitochondrial from Leishmania infantum.